The following is a 371-amino-acid chain: Putative glutamate--cysteine ligase 2 (371 aa).

It belongs to the glutamate--cysteine ligase type 2 family. YbdK subfamily.

The catalysed reaction is L-cysteine + L-glutamate + ATP = gamma-L-glutamyl-L-cysteine + ADP + phosphate + H(+). Functionally, ATP-dependent carboxylate-amine ligase which exhibits weak glutamate--cysteine ligase activity. This is Putative glutamate--cysteine ligase 2 from Burkholderia mallei (strain NCTC 10247).